Consider the following 184-residue polypeptide: Tumor necrosis factor alpha-induced protein 8-like protein 2 (184 aa).

Ser3 carries the phosphoserine modification.

The protein belongs to the TNFAIP8 family. TNFAIP8L2 subfamily. May interact with CASP8; however, such result is unclear since could not reproduce the interaction with CASP8. Interacts with RAC1. Phosphorylated by TAK1/MAP3K7; this phosphorylation triggers association with BTRC and subsequent ubiquitination and degradation. Post-translationally, ubiquitinated in a BTRC-depdent manner; leading to degradation mediated through the proteasome pathway.

It localises to the cytoplasm. It is found in the nucleus. The protein resides in the lysosome. Functionally, acts as a negative regulator of innate and adaptive immunity by maintaining immune homeostasis. Plays a regulatory role in the Toll-like signaling pathway by determining the strength of LPS-induced signaling and gene expression. Inhibits TCR-mediated T-cell activation and negatively regulate T-cell function to prevent hyperresponsiveness. Also inhibits autolysosome formation via negatively modulating MTOR activation by interacting with RAC1 and promoting the disassociation of the RAC1-MTOR complex. Plays an essential role in NK-cell biology by acting as a checkpoint and displaying an expression pattern correlating with NK-cell maturation process and by negatively regulating NK-cell maturation and antitumor immunity. Mechanistically, suppresses IL-15-triggered mTOR activity in NK-cells. The protein is Tumor necrosis factor alpha-induced protein 8-like protein 2 (TNFAIP8L2) of Callithrix jacchus (White-tufted-ear marmoset).